The following is a 137-amino-acid chain: Large ribosomal subunit protein uL16 (137 aa).

Belongs to the universal ribosomal protein uL16 family. Part of the 50S ribosomal subunit.

Binds 23S rRNA and is also seen to make contacts with the A and possibly P site tRNAs. This chain is Large ribosomal subunit protein uL16, found in Rhodopseudomonas palustris (strain BisA53).